Here is a 311-residue protein sequence, read N- to C-terminus: Glycerol-3-phosphate dehydrogenase [NAD(P)+] (311 aa).

4 residues coordinate NADPH: tryptophan 12, arginine 31, arginine 32, and lysine 96. Residues lysine 96, glycine 124, and serine 126 each contribute to the sn-glycerol 3-phosphate site. Alanine 128 serves as a coordination point for NADPH. Lysine 178, aspartate 231, serine 241, arginine 242, and asparagine 243 together coordinate sn-glycerol 3-phosphate. The active-site Proton acceptor is lysine 178. Arginine 242 provides a ligand contact to NADPH. Residues valine 266 and glutamate 268 each contribute to the NADPH site.

It belongs to the NAD-dependent glycerol-3-phosphate dehydrogenase family.

Its subcellular location is the cytoplasm. The enzyme catalyses sn-glycerol 3-phosphate + NAD(+) = dihydroxyacetone phosphate + NADH + H(+). The catalysed reaction is sn-glycerol 3-phosphate + NADP(+) = dihydroxyacetone phosphate + NADPH + H(+). It functions in the pathway membrane lipid metabolism; glycerophospholipid metabolism. Functionally, catalyzes the reduction of the glycolytic intermediate dihydroxyacetone phosphate (DHAP) to sn-glycerol 3-phosphate (G3P), the key precursor for phospholipid synthesis. This is Glycerol-3-phosphate dehydrogenase [NAD(P)+] from Helicobacter hepaticus (strain ATCC 51449 / 3B1).